A 689-amino-acid polypeptide reads, in one-letter code: Protein CFAP20DC (689 aa).

3 disordered regions span residues 241–263, 333–423, and 584–659; these read LKST…NRIE, SKES…GPSE, and ISTS…DLSV. Composition is skewed to polar residues over residues 251-260 and 343-359; these read TPSGSSSGNN and EESQ…SSRP. The segment covering 394–405 has biased composition (acidic residues); the sequence is SEDDFYGGDSSE. The segment covering 409 to 421 has biased composition (polar residues); sequence HSIQGSRGPTTGP. Low complexity predominate over residues 584–593; that stretch reads ISTSSDDTTT.

The polypeptide is Protein CFAP20DC (Homo sapiens (Human)).